The sequence spans 292 residues: Shikimate dehydrogenase (NADP(+)) (292 aa).

Shikimate-binding positions include 22–24 (SLS) and S69. Residue K73 is the Proton acceptor of the active site. 2 residues coordinate shikimate: N94 and D111. Residues 135–139 (GVGGA) and I236 each bind NADP(+). Y238 lines the shikimate pocket. Residue G260 participates in NADP(+) binding.

Belongs to the shikimate dehydrogenase family. Homodimer.

It catalyses the reaction shikimate + NADP(+) = 3-dehydroshikimate + NADPH + H(+). Its pathway is metabolic intermediate biosynthesis; chorismate biosynthesis; chorismate from D-erythrose 4-phosphate and phosphoenolpyruvate: step 4/7. Its function is as follows. Involved in the biosynthesis of the chorismate, which leads to the biosynthesis of aromatic amino acids. Catalyzes the reversible NADPH linked reduction of 3-dehydroshikimate (DHSA) to yield shikimate (SA). The polypeptide is Shikimate dehydrogenase (NADP(+)) (Streptococcus pyogenes serotype M18 (strain MGAS8232)).